A 431-amino-acid chain; its full sequence is Histidine--tRNA ligase (431 aa).

The protein belongs to the class-II aminoacyl-tRNA synthetase family. Homodimer.

It localises to the cytoplasm. The enzyme catalyses tRNA(His) + L-histidine + ATP = L-histidyl-tRNA(His) + AMP + diphosphate + H(+). This is Histidine--tRNA ligase from Finegoldia magna (strain ATCC 29328 / DSM 20472 / WAL 2508) (Peptostreptococcus magnus).